Here is a 146-residue protein sequence, read N- to C-terminus: 2S sulfur-rich seed storage protein 1 (146 aa).

The signal sequence occupies residues 1 to 22 (MAKISVAAAALLVLMALGHATA). Residues 23–36 (FRATVTTTVVEEEN) constitute a propeptide that is removed on maturation. Q37 is modified (pyrrolidone carboxylic acid). Disulfide bonds link C40–C92, C53–C81, C82–C130, and C94–C137. Positions 65–69 (PYQTM) are excised as a propeptide. The propeptide occupies 143 to 146 (IAGF).

This sequence belongs to the 2S seed storage albumins family. As to quaternary structure, the mature protein consists of a small and a large chain linked by disulfide bonds.

Functionally, this is a 2S seed storage protein. The protein is 2S sulfur-rich seed storage protein 1 (BE2S1) of Bertholletia excelsa (Brazil nut).